Here is a 272-residue protein sequence, read N- to C-terminus: uncharacterized protein (272 aa).

Residues Asp-71 and Glu-163 contribute to the active site.

The protein belongs to the glycosyl hydrolase 25 family.

This is an uncharacterized protein from Escherichia coli O6:H1 (strain CFT073 / ATCC 700928 / UPEC).